A 204-amino-acid polypeptide reads, in one-letter code: Copper-binding protein CutI (204 aa).

The N-terminal stretch at 1–26 (MLKKIALTLCPAIVGSLLFFTAPASA) is a signal peptide. His27 and Glu50 together coordinate Cu(2+). The Extracellular portion of the chain corresponds to 27-178 (HVSVKPAESA…DDSENSGSSA (152 aa)). A disordered region spans residues 146 to 176 (PHSITNITSAKQVTDEHGATKTEDDSENSGS). The segment covering 147 to 157 (HSITNITSAKQ) has biased composition (polar residues). Over residues 158–168 (VTDEHGATKTE) the composition is skewed to basic and acidic residues. Residues 179 to 199 (LDITAMVLSAAAIILSVAALV) form a helical membrane-spanning segment. The Cytoplasmic portion of the chain corresponds to 200-204 (KKKRA).

It localises to the cell membrane. Functionally, copper-binding protein that probably plays a role in copper homeostasis. May act as metallochaperone, possibly to facilitate copper uptake via the CutJ/YcnJ importer. Preferentially binds Cu in its oxidized Cu(II) state in a 1:1 stoichiometry. The polypeptide is Copper-binding protein CutI (Bacillus subtilis (strain 168)).